The sequence spans 345 residues: GDSL esterase/lipase At1g23500 (345 aa).

An N-terminal signal peptide occupies residues 1–24; that stretch reads MNFSLLSTMLMALSSVCLFFVGYA. Ser-42 serves as the catalytic Nucleophile. Asn-103 is a glycosylation site (N-linked (GlcNAc...) asparagine). Catalysis depends on residues Asp-320 and His-323.

Belongs to the 'GDSL' lipolytic enzyme family.

It localises to the secreted. This is GDSL esterase/lipase At1g23500 from Arabidopsis thaliana (Mouse-ear cress).